We begin with the raw amino-acid sequence, 61 residues long: UPF0434 protein PSPTO_3844 (61 aa).

The protein belongs to the UPF0434 family.

In Pseudomonas syringae pv. tomato (strain ATCC BAA-871 / DC3000), this protein is UPF0434 protein PSPTO_3844.